A 346-amino-acid polypeptide reads, in one-letter code: Protein Rae1 (346 aa).

4 WD repeats span residues 17-61 (ASPP…ATVP), 64-105 (MKTM…VMQV), 126-148 (LMTG…PMMT), and 255-289 (VNDI…KLKS).

The protein belongs to the WD repeat rae1 family. As to quaternary structure, interacts with hiw; the interaction with Rae1 may protect hiw from autophagy-mediated degradation. Interacts with Nup98-96. Head (at protein level).

Its subcellular location is the cytoplasm. The protein localises to the perinuclear region. The protein resides in the nucleus. It localises to the nucleus envelope. It is found in the chromosome. Probable component of the nuclear pore complex (NPC) which regulates the nuclear export of specific mRNAs and promotes cell cycle progression during mitosis and male meiosis. Acts with Nup98-96 to promote the nuclear export of specific mRNAs such as Moe, however it does not appear to be required for general nuclear mRNA transport. Essential mitotic and male meiotic cell cycle regulator with roles in many aspects of the cell cycle including chromatin organization and condensation, spindle assembly, chromosome segregation, and maintaining nuclear structure. During male meiosis it is required for completion of meiosis I, as well as accurate cytokinesis of the secondary spermatocytes, and postmeiotic differentiation of spermatids. Acts as a downstream regulatory target of the Hippo/SWH (Sav/Wts/Hpo) signaling pathway to promote mitotic cell cycle progression and proliferation during wing and eye development, and thereby plays a key role in integrating the regulation of proliferation with organ size control. When the Hippo/SWH signaling pathway is inactive, Rae1 acts independently of yki to increase organ size by promoting mitotic S-phase entry and increase cellular proliferation. When the Hippo/SWH signaling pathway is active it inhibits the activity of Rae1 in a Wts-dependent manner to restrict organ growth. However, Rae1 is also able to negatively regulate the levels and activity of yki likely by activating the core kinases of the Hippo/SWH signaling pathway hpo and Wts and increasing the protein levels of hpo, Mer and Wts; it is therefore likely that it functions as part of a negative feedback loop with the Hippo/SWH signaling pathway to regulate pathway homeostasis and prevent organ overgrowth. Promotes mitotic cell cycle progression, at least in part, by increasing the accumulation of mitotic cyclins such as CycB, possibly by directly up-regulating cyclin transcripts or by inhibiting the anaphase promoting complex/cyclosome (APC/C) activator fzy. Also required in presynaptic, postmitotic motor neurons to restrain synaptic terminal growth. Promotes the expression and stability of the an E3 ubiquitin ligase of hiw, and is likely to function in the regulation of synaptic growth by binding to hiw and protecting it from autophagy-mediated degradation. This chain is Protein Rae1, found in Drosophila melanogaster (Fruit fly).